Consider the following 520-residue polypeptide: Gamma aminobutyrate transaminase 3, chloroplastic (520 aa).

The N-terminal 44 residues, 1-44 (MAKITSLIGSGIVAATNQVGPHVKHIPAVGNLQKQIVSDQIQVR), are a transit peptide targeting the chloroplast. 172 to 173 (GS) serves as a coordination point for pyridoxal 5'-phosphate. Residue Tyr-205 participates in substrate binding. Asp-312 contributes to the pyridoxal 5'-phosphate binding site. Lys-341 serves as a coordination point for substrate. Lys-341 carries the N6-(pyridoxal phosphate)lysine modification.

Belongs to the class-III pyridoxal-phosphate-dependent aminotransferase family. In terms of tissue distribution, expressed in leaves, roots, stems, flowers and fruits.

The protein localises to the plastid. It localises to the chloroplast. The enzyme catalyses 4-aminobutanoate + pyruvate = succinate semialdehyde + L-alanine. The catalysed reaction is 4-aminobutanoate + glyoxylate = succinate semialdehyde + glycine. Its function is as follows. Transaminase that degrades gamma-amino butyric acid (GABA) and uses pyruvate or glyoxylate as amino-group acceptor. Cannot use beta-alanine, ornithine, acetylornithine, serine, glycine, asparagine, glutamine, glutamate, valine, leucine, isoleucine, methionine, phenylalanine, histidine, lysine, arginine, aspartate, threonine, tyrosine, tryptophan, proline, or cysteine as amino donors. The protein is Gamma aminobutyrate transaminase 3, chloroplastic (GABA-TP3) of Solanum lycopersicum (Tomato).